We begin with the raw amino-acid sequence, 330 residues long: 6-methylsalicylic acid decarboxylase acuB (330 aa).

His6, His8, His156, and Asp276 together coordinate Zn(2+).

Belongs to the metallo-dependent hydrolases superfamily. ACMSD family. Monomer.

It is found in the cytoplasm. The protein localises to the cytosol. The catalysed reaction is 6-methylsalicylate + H(+) = 3-methylphenol + CO2. Its pathway is secondary metabolite biosynthesis. In terms of biological role, 6-methylsalicylic acid decarboxylase; part of the gene cluster that mediates the biosynthesis of aculins. The pathway begins with the synthesis of 6-methylsalicylic acid by the polyketide synthase (PKS) acuA via condensation of acetate and malonate units. The 6-methylsalicylic acid decarboxylase acuB then catalyzes the decarboxylation of 6-methylsalicylic acid to yield m-cresol (also known as 3-methylphenol). These first reactions occur in the cytosol. The intermediate m-cresol is then transported into the endoplasmic reticulum where the cytochrome P450 monooxygenase acuC converts it to m-hydroxybenzyl alcohol, which is further converted to gentisyl alcohol by the cytochrome P450 monooxygenase acuD. Gentisyl alcohol is further oxidized by the oxidoreductase acuE that probably catalyzes hydroxylation of the aromatic ring. The aromatic system might then be opened by oxidation through a Baeyer-Villiger type of oxidation, which could be catalyzed by acuF, with the carboxylic acid at C-1 subsequently reduced to an aldehyde by acuG. Subsequently, a hemiacetal is formed, before the dehydrogenase acuH would reduce the double bond between C-4 and C-6. Finally, keto-enol tautomerism results in formation of aculinic acid, which exists as two diastereomers (both R/S configurations at C-1) by non-enzymatic hemiacetal formation. The carboxypeptidase acuI could be involved in the linking of aculinic acid to an aculene A moiety produced by the aculene biosynthesis cluster and which leads to the production of aculin A. AcuI may also be involved in the attachment of proline to aculinic acid to form epi-aculins A and B. The chain is 6-methylsalicylic acid decarboxylase acuB from Aspergillus aculeatus (strain ATCC 16872 / CBS 172.66 / WB 5094).